The chain runs to 2559 residues: MAVSYTNFTNLPAKLYLVYRACTFTPLHAENLASNITQAMKQLLAQPDACVKDIDIFSPFNEITVSRWNAEIQEAPDASLLEVIRGHSRYRPSHTAIHAWDGTVSYSELDVTSTKWAIYLQSQGVKAGCLVPIMMDHSKWAVIGQLAILKAGGAFVPLDPGQPLFRLENIVRLTTESHISLSSPHLANRLHGLVETVLVISDERTESLPKANAHHDAADISPVVNNGPAYVLFTSGSTGRPKGCVVGYGALSDVVNQTTALKIGPDSRVLQFASYTYGMSLIEIYCTLAAGATICVPSEDDRLNALSSILLSMQVTWAILTPSTTISIADAVVCLNTLVVAGEALTMDRLHSLADKTEVIQAFGLTEWAGICCVSQRITSETDLRVIGRSHTARLRLVDPANYNRLAPVGAVAELLIEGPAMADGYLGDPEQTARAFPKTSTGGRFYRTGDLVQYAADGSLRYVSRKDSQVKIRGMRVELTEVEYQIRRAFPGVEEVVVEAAAPKNSSGIPILVAFLCPEDLSGLVCTIKETMKRSLPDYMRPSVYVPLEFIPKTISRKVDRKALRHLVQSSTRHELERYTQASLPSLVGPRTNIEQLVHELVADMLRLDPLSLGMRQNFISLGGDSVTAMLLVNKLRRKGYKITVAAILRAQSLLDVASLVHYPAGLEPSAQKSTPGDLKLVPRAIHRISDSGTVEQSFSQARIWFLQTLRPSSTWLLLPSATRLRGSLRVDALETAFSALVERHETLRTTFEDREGSGVQVVAPFHPYQLEIIEIPSGSDADLITALHGQQIRPMDLTKECWRATLFRLSPDEHVLNIVLHHIICDGWSFDIFLKTLQIYYAAALQGHSPLEGVEPLPIQYRDFSIWQRQNKARTSVEQLAYWVRQLDGSQPAEFLCDKKRPHMLSGKAGSQPVKIDVCLYHDVKRFCSMKHVTPFTVLFAAFRATHYRLTGASDATIGIPSVSRPQAELEELIGYFGNVQCIRTKVESCSSSFQLLVHQVQSSITAAFENQDVPFDQIVSKLLKDRDVSRHPLVQVAFILHTQAQFGKLRLEGLESEQLPLPHVSRLDLEFHLYPGEGGGDLQGEVLYSMDLFHAETINAMVLVFYDILREGIRKPDTSIDSLPFPGGYSILNERGLIYPQQSRSLSIIDLFDEQVRAQTDEVAVKDINGHLTYSELHKRSSMLSAWLKNSYSFAEETPVGVYASRSCESIVAILGILRAGLAYIRLDIDAPKARTEMILSCLPNCRLVLVASGLEPPRVCVQGVQFAYIADSCKETVTDVHDFLKTCTPPGPMSLAYIVFTSGTTGTPKGVMIEHHGVANLAKEPDIIAHAVNSRIASHMLNPSFDASGFEIYATLLNGGTLVCIDNSVVFDFPALGATFIQHGIRRAFMTPAILKQTLASCNSLLRMLDILYVGGDKLDPGDVAKVQRLTTGRVQIFNCYGPTENSIVSTKYRVPVDEEGVNGVPIGRSISNIGAYVVDRSLRLLPLGVLGELVVTGPALARGYIDPKHDIGRFIELDISEEVAPMRAYRTGDMVRYRPRDAQLEFFGRMDQQVKVRGYRVELAEIDNTLLLSPFISAAVTVARQDQELVSFVTVSDMASGFNDRAETEHVDSWLDVVEGEDYYGSVGTIEPHSLGADFLGWISMYDGEPIDKNDMREWLQDTITAILSCSPSSVLEIGTGSGMILFNIIGSIQKYVGLEPSPRAVDFVRRAVHWVPEAAGKVNIKCGTASDIGRLQDMGTLDLAVINSVAQYFPSLDYLRNTIKDLVRQGVKSIFLGDIRSYALYQEFQVSKVLRLYGRGLTITRFRQHMAEIARLEKELLVDPAFFTSLPAELPGMIEHVEIWPKRMKATNELSCYRYTAVLHVKRAEQPLLIREVKEISWADFQAKGWDYNSLSQMLEISDASTVLAVENIPFKKTIVERDMVRLLQELPEDTGSVSWSSNARGPKRALAPIDLFDVAKKTGWDIEISWARQRSQRGGLDAVFHRQGPRVLFRFPVDPYIPGACSNDPLSPQRNRLLEKHLLEYMSTKLPTYMVPKLIHVLDKMPINNIGKVDRHVLAQRAAITSATISESESLFRREIEPAFTSEIERAVWEEFTGVLGREVGVADSFFRNGGHSLMAIRLVSRINKRLSSALSVSELFRYPTVSGLAQHLQGLGALETRAVTVYAPFSLLDRPYDPSEVRLPPEADIVDVTPVTECQAWFLQCWSLVSHSFIIHGVLDVDRLRAACQAVVRHHPPLRTVFTEFQTQLVQAFDGVSLSAILYDIARAYGNSASPLSNAVPFSHHLHMCRSTRPDALAFWKAYLRDAVLTEVPRPEEVNATNEKPLEIIQQEALGEVSLPSTVDITFSTLVNAAIALALARLVQRNDVIFACVMTSRGVLAELAESVVGPCVNRCLLRVKVPDDSNPDSTALDFCRNLRDNQAQVSGHGHLGFRDVVENCTSWASLGVDVGRIAFVTHLPAETALETFSLTLLDSPVSYDSTNVTINPGNQILVRSAITDEQQACIQVLSSSNVMGAEKALFLANRILMIAQRLSVSVSGGRSPRLLELDK.

The segment at 90-474 (YRPSHTAIHA…SRKDSQVKIR (385 aa)) is adenylation 1. Residues 593–669 (TNIEQLVHEL…SLVHYPAGLE (77 aa)) enclose the Carrier 1 domain. Serine 627 carries the O-(pantetheine 4'-phosphoryl)serine modification. Residues 695-989 (TVEQSFSQAR…GNVQCIRTKV (295 aa)) form a condensation 1 region. Residues 1155–1562 (FDEQVRAQTD…GRMDQQVKVR (408 aa)) are adenylation 2. Residues 1681-1776 (LEIGTGSGMI…NTIKDLVRQG (96 aa)) are methyltransferase. Residues 2090-2164 (AFTSEIERAV…GLAQHLQGLG (75 aa)) form the Carrier 2 domain. Serine 2124 carries the post-translational modification O-(pantetheine 4'-phosphoryl)serine. A condensation 2 region spans residues 2261–2409 (FDGVSLSAIL…VNRCLLRVKV (149 aa)).

The protein belongs to the NRP synthetase family.

It carries out the reaction O-methyl-L-tyrosine + anthranilate + S-adenosyl-L-methionine + 2 ATP = (-)-4'-methoxycyclopeptine + 2 AMP + S-adenosyl-L-homocysteine + 2 diphosphate + 2 H(+). The catalysed reaction is anthranilate + L-phenylalanine + S-adenosyl-L-methionine + 2 ATP = cyclopeptine + 2 AMP + S-adenosyl-L-homocysteine + 2 diphosphate + 2 H(+). It functions in the pathway secondary metabolite biosynthesis. Its pathway is alkaloid biosynthesis. The protein operates within mycotoxin biosynthesis. Functionally, nonribosomal peptide synthetase; part of the gene cluster that mediates the biosynthesis of the aspoquinolone mycotoxins. The first stage is catalyzed by the nonribosomal peptide synthetase asqK that condenses anthranilic acid and O-methyl-L-tyrosine to produce 4'-methoxycyclopeptin. AsqK is also able to use anthranilic acid and L-phenylalanine as substrates to produce cyclopeptin, but at a tenfold lower rate. Within the pathway, 4'-methoxycyclopeptin is then converted to 4'-methoxydehydrocyclopeptin by the ketoglutarate-dependent dioxygenase asqJ. AsqJ also converts its first product 4'-methoxydehydrocyclopeptin to 4'-methoxycyclopenin. The following conversion of 4'-methoxycyclopenin into 4'-methoxyviridicatin is catalyzed by the cyclopenase asqI. 4'-methoxyviridicatin is the precursor of quinolone natural products, and is further converted to quinolinone B. The prenyltransferase asqH1 then catalyzes the canonical Friedel-Crafts alkylation of quinolinone B with dimethylallyl cation to yield dimethylallyl quinolone, which is subjected to FAD-dependent dehydrogenation by the FAD-linked oxidoreductase asqF to yield conjugated aryl diene. The delta(3') double bond then serves as the site of the second alkylation with DMAPP catalyzed by the prenyltransferase asqH2 to yield a carbenium ion intermediate, which can be attacked by H(2)O to yield a styrenyl quinolone containing a C3'-hydroxyprenyl chain. The FAD-dependent monooxygenase asqG performs epoxidation of the terminal C7'-C8' olefin. Finally, after dehydratation of the epoxide at C3 by asqC, the quinolone epoxide rearrangement protein asqO catalyzes an enzymatic 3-exo-tet cyclization to yield the cyclopropyl-THF ring system in aspoquinolone. This chain is Nonribosomal peptide synthetase asqK, found in Emericella nidulans (strain FGSC A4 / ATCC 38163 / CBS 112.46 / NRRL 194 / M139) (Aspergillus nidulans).